The primary structure comprises 84 residues: uncharacterized protein (84 aa).

An HTH cro/C1-type domain is found at Ile7–Ile62. The H-T-H motif DNA-binding region spans Val18 to Asn37.

This is an uncharacterized protein from Bacillus subtilis (strain 168).